The sequence spans 240 residues: Phosducin-like protein 3 (240 aa).

The residue at position 1 (M1) is an N-acetylmethionine. The region spanning 27 to 181 is the Phosducin domain; the sequence is KELEEEEAEK…EGDIKAQFIG (155 aa). Residues S44, S65, S235, and S237 each carry the phosphoserine modification. The thioredoxin fold stretch occupies residues 92–240; the sequence is FGEVLEISGK…MRRDSDSEDD (149 aa).

It belongs to the phosducin family. In terms of assembly, interacts (via thioredoxin fold region) with KDR/VEGFR2 (via juxtamembrane domain). Forms ternary complexes with the chaperonin CCT complex and actin substrate, leading to inhibition of actin folding. Interacts with XIAP (via BIR 3 and RING domain). Interacts with HSP90AA1 and HSP90AB1. N-terminal methionine acetylation destabilizes the protein. Expressed in blood vessels (at protein level).

The protein resides in the cytoplasm. It localises to the perinuclear region. It is found in the endoplasmic reticulum. In terms of biological role, acts as a chaperone for the angiogenic VEGF receptor KDR/VEGFR2, increasing its abundance by inhibiting its ubiquitination and degradation. Inhibits the folding activity of the chaperonin-containing T-complex (CCT) which leads to inhibition of cytoskeletal actin folding. Acts as a chaperone during heat shock alongside HSP90 and HSP40/70 chaperone complexes. Modulates the activation of caspases during apoptosis. The sequence is that of Phosducin-like protein 3 (Pdcl3) from Mus musculus (Mouse).